A 119-amino-acid chain; its full sequence is Dihydroneopterin aldolase (119 aa).

Substrate contacts are provided by residues Glu21, Tyr53, and 72 to 73 (IE). Lys99 acts as the Proton donor/acceptor in catalysis.

Belongs to the DHNA family.

The enzyme catalyses 7,8-dihydroneopterin = 6-hydroxymethyl-7,8-dihydropterin + glycolaldehyde. Its pathway is cofactor biosynthesis; tetrahydrofolate biosynthesis; 2-amino-4-hydroxy-6-hydroxymethyl-7,8-dihydropteridine diphosphate from 7,8-dihydroneopterin triphosphate: step 3/4. Functionally, catalyzes the conversion of 7,8-dihydroneopterin to 6-hydroxymethyl-7,8-dihydropterin. This is Dihydroneopterin aldolase (folB) from Streptococcus pyogenes serotype M1.